Reading from the N-terminus, the 425-residue chain is Aromatic prenyl transferase PC-22 (425 aa).

L-tryptophan contacts are provided by residues 83-84 and Glu-92; that span reads GI. Positions 107, 198, 200, 265, 267, 269, 345, 410, and 414 each coordinate substrate.

It belongs to the tryptophan dimethylallyltransferase family. In terms of assembly, homodimer.

It participates in secondary metabolite biosynthesis. In terms of biological role, aromatic prenyl transferase; part of the gene cluster that mediates the biosynthesis of the indole diterpenes penitrems. The geranylgeranyl diphosphate (GGPP) synthase penG catalyzes the first step in penitrem biosynthesis via conversion of farnesyl pyrophosphate and isopentyl pyrophosphate into geranylgeranyl pyrophosphate (GGPP). Condensation of indole-3-glycerol phosphate with GGPP by the prenyl transferase penC then forms 3-geranylgeranylindole (3-GGI). Epoxidation by the FAD-dependent monooxygenase penM leads to a epoxidized-GGI that is substrate of the terpene cyclase penB for cyclization to yield paspaline. Paspaline is subsequently converted to 13-desoxypaxilline by the cytochrome P450 monooxygenase penP, the latter being then converted to paxilline by the cytochrome P450 monooxygenase penQ. Paxilline is converted to beta-paxitriol via C-10 ketoreduction by the short-chain dehydrogenase PC-15 which can be monoprenylated at the C-20 by the indole diterpene prenyltransferase penD. A two-step elimination (acetylation and elimination) process performed by the O-acetyltransferase PC-16 and the P.simplicissimum ptmI-ortholog not yet identified in P.crustosum, leads to the production of the prenylated form of penijanthine. The FAD-linked oxidoreductase ptmO then converts the prenylated form of penijanthine into PC-M5 which is in turn transformed into PC-M4 by the aromatic dimethylallyltransferase PC-22. A series of oxidation steps involving 4 cytochrome P450 monooxygenases (PC-21, PC-05, PC-23, PC-20) and a FAD-dependent monooxygenase (PC-14) are required for the transformation of PC-M4 to penitrems A and E. Synthesis of these final products is proposed to proceed via penitrems D and C (PC-21, PC-05, PC-14) and penitrems B and F (PC-21, PC-05, PC-14, PC-23). This Penicillium crustosum (Blue mold fungus) protein is Aromatic prenyl transferase PC-22.